A 274-amino-acid polypeptide reads, in one-letter code: Rhamnulose-1-phosphate aldolase (274 aa).

Glu-117 is an active-site residue. Zn(2+) contacts are provided by His-141, His-143, and His-212.

The protein belongs to the aldolase class II family. RhaD subfamily. Homotetramer. Requires Zn(2+) as cofactor.

The protein resides in the cytoplasm. The catalysed reaction is L-rhamnulose 1-phosphate = (S)-lactaldehyde + dihydroxyacetone phosphate. It functions in the pathway carbohydrate degradation; L-rhamnose degradation; glycerone phosphate from L-rhamnose: step 3/3. Catalyzes the reversible cleavage of L-rhamnulose-1-phosphate to dihydroxyacetone phosphate (DHAP) and L-lactaldehyde. This chain is Rhamnulose-1-phosphate aldolase, found in Shigella sonnei (strain Ss046).